The chain runs to 139 residues: Large ribosomal subunit protein uL16c (139 aa).

This sequence belongs to the universal ribosomal protein uL16 family. In terms of assembly, part of the 50S ribosomal subunit.

It localises to the plastid. The protein localises to the chloroplast. This is Large ribosomal subunit protein uL16c from Cicer arietinum (Chickpea).